The primary structure comprises 334 residues: Phosphate acyltransferase (334 aa).

Belongs to the PlsX family. In terms of assembly, homodimer. Probably interacts with PlsY.

Its subcellular location is the cytoplasm. The enzyme catalyses a fatty acyl-[ACP] + phosphate = an acyl phosphate + holo-[ACP]. It participates in lipid metabolism; phospholipid metabolism. Catalyzes the reversible formation of acyl-phosphate (acyl-PO(4)) from acyl-[acyl-carrier-protein] (acyl-ACP). This enzyme utilizes acyl-ACP as fatty acyl donor, but not acyl-CoA. The polypeptide is Phosphate acyltransferase (Caldicellulosiruptor bescii (strain ATCC BAA-1888 / DSM 6725 / KCTC 15123 / Z-1320) (Anaerocellum thermophilum)).